The primary structure comprises 1067 residues: Cadmium/zinc-transporting ATPase HMA2 (1067 aa).

The HMA domain occupies 9–75; that stretch reads QKSYFDVLGI…ALNQARLEAS (67 aa). Helical transmembrane passes span 94–114, 117–137, 140–160, 162–182, 313–333, 342–362, 649–669, and 673–693; these read YVLLCGLLLVVSLFEHFWHPL, FALVAAAAGLPPIVLRSIAAI, LTLDVNILMLIAVAGAIALKD, SEAGFIVFLFTTAEWLETRAS, YTPAVVVMAGSVAAIPAIAKA, LALVLLVSACPCALVLSTPIA, IIVNIIFSVITKLAIVGLAFA, and LIWAAVLADVGTCLLVIMYSM. Disordered regions lie at residues 711–739, 760–790, and 960–996; these read HHGSPKKCCSSSHHGSHAKKNHGVSHHCS, HDHHHEHNHHEEPAHKHSSNQHGCHDHSHGH, and NDTHPVQEHSISIEESSDHHEHHHNEEHKAEDCGHHP. Residues 724 to 735 show a composition bias toward basic residues; sequence HGSHAKKNHGVS. Composition is skewed to basic and acidic residues over residues 760 to 774 and 975 to 996; these read HDHHHEHNHHEEPAH and SSDHHEHHHNEEHKAEDCGHHP.

The protein belongs to the cation transport ATPase (P-type) (TC 3.A.3) family. Type IB subfamily. In terms of tissue distribution, in roots, localizes at the pericycle cells. In nodes, localizes in the phloem parenchyma and companion cells of both enlarged and diffuse vascular bundles.

It is found in the cell membrane. The catalysed reaction is Zn(2+)(in) + ATP + H2O = Zn(2+)(out) + ADP + phosphate + H(+). It carries out the reaction Cd(2+)(in) + ATP + H2O = Cd(2+)(out) + ADP + phosphate + H(+). In terms of biological role, zinc/cadmium transporter that plays an essential role in promoting translocation of zinc and cadmium from roots to shoots. May control cadmium loading into xylem. In roots, transports zinc and cadmium from the apoplast to the symplast to facilitate translocation via the phloem. In nodes, functions to load zinc and cadmium to the phloem for the preferential distribution to the upper nodes and panicles. The chain is Cadmium/zinc-transporting ATPase HMA2 from Oryza sativa subsp. japonica (Rice).